Consider the following 355-residue polypeptide: UDP-3-O-acylglucosamine N-acyltransferase (355 aa).

H258 acts as the Proton acceptor in catalysis.

The protein belongs to the transferase hexapeptide repeat family. LpxD subfamily. In terms of assembly, homotrimer.

It carries out the reaction a UDP-3-O-[(3R)-3-hydroxyacyl]-alpha-D-glucosamine + a (3R)-hydroxyacyl-[ACP] = a UDP-2-N,3-O-bis[(3R)-3-hydroxyacyl]-alpha-D-glucosamine + holo-[ACP] + H(+). It participates in bacterial outer membrane biogenesis; LPS lipid A biosynthesis. Catalyzes the N-acylation of UDP-3-O-acylglucosamine using 3-hydroxyacyl-ACP as the acyl donor. Is involved in the biosynthesis of lipid A, a phosphorylated glycolipid that anchors the lipopolysaccharide to the outer membrane of the cell. This Bradyrhizobium sp. (strain ORS 278) protein is UDP-3-O-acylglucosamine N-acyltransferase.